The chain runs to 557 residues: D-arabinono-1,4-lactone oxidase (557 aa).

Positions 25–209 (FLCKPQAIFQ…THVTLRTCPK (185 aa)) constitute an FAD-binding PCMH-type domain. FAD-binding positions include 58-61 (VGSG), 62-63 (HS), 144-148 (ISTGT), Ile-199, and 543-546 (LSGK). At His-62 the chain carries Pros-8alpha-FAD histidine.

It belongs to the oxygen-dependent FAD-linked oxidoreductase family. FAD serves as cofactor.

The catalysed reaction is D-arabinono-1,4-lactone + O2 = dehydro-D-arabinono-1,4-lactone + H2O2 + H(+). It carries out the reaction L-galactono-1,4-lactone + O2 = L-ascorbate + H2O2 + H(+). It catalyses the reaction L-gulono-1,4-lactone + O2 = L-ascorbate + H2O2 + H(+). The enzyme catalyses L-xylono-1,4-lactone + O2 = dehydro-L-arabinono-1,4-lactone + H2O2 + H(+). It participates in cofactor biosynthesis; D-erythroascorbate biosynthesis; dehydro-D-arabinono-1,4-lactone from D-arabinose: step 2/2. In terms of biological role, D-arabinono-1,4-lactone oxidase that catalyzes the final step of biosynthesis of D-erythroascorbic acid, an important antioxidant and one of the virulence factors enhancing the pathogenicity. Is also able to oxidize L-galactono-1,4-lactone, L-xylono-1,4-lactone and L-gulono-1,4-lactone. This chain is D-arabinono-1,4-lactone oxidase, found in Candida albicans (strain SC5314 / ATCC MYA-2876) (Yeast).